A 498-amino-acid chain; its full sequence is Pyridine nucleotide-disulfide oxidoreductase domain-containing protein 1 (498 aa).

Position 1 is an N-acetylmethionine (Met-1).

This sequence belongs to the class-I pyridine nucleotide-disulfide oxidoreductase family. PYROXD1 subfamily. FAD serves as cofactor.

The protein resides in the nucleus. It is found in the cytoplasm. It localises to the myofibril. The protein localises to the sarcomere. Its function is as follows. Probable FAD-dependent oxidoreductase; involved in the cellular oxidative stress response. Required for normal sarcomere structure and muscle fiber integrity. The protein is Pyridine nucleotide-disulfide oxidoreductase domain-containing protein 1 (Pyroxd1) of Mus musculus (Mouse).